Here is a 560-residue protein sequence, read N- to C-terminus: Solute carrier family 49 member A3 (560 aa).

12 helical membrane passes run 30–50, 70–90, 100–120, 125–145, 166–186, 192–212, 250–270, 282–302, 318–338, 341–361, 379–399, and 422–442; these read WVFLLAISLLNCSNATLWLSF, WLSLVYLVVSTPFGVAAIWIL, ILGAWLNFAGSVLRMVPCMVV, PFAFLMGGQSLCALAQSLVIF, LATMSNPLGVLVANVLSPVLV, IPLMLGVYTIPAGVVCLLSTI, VILAVCLGGMIGISASFSALL, GFSGLCGALFITFGILGALAL, IGLCLFSLACVPFALVSQLQG, LALAATCSLLGLFGFSVGPVA, GMIFVLGQAEGILIMLAMTAL, and VSLLLMAGLCTFFSCILAVFF. The segment at 451–540 is disordered; that stretch reads AESGEPPSTR…PGRLAGRVQA (90 aa). The span at 466 to 481 shows a compositional bias: gly residues; the sequence is ADSGPGVDRGGAGRAG.

The protein belongs to the major facilitator superfamily.

It localises to the membrane. This chain is Solute carrier family 49 member A3, found in Homo sapiens (Human).